The sequence spans 343 residues: Methylthioribose-1-phosphate isomerase (343 aa).

Substrate contacts are provided by residues 48–50 (RGA), arginine 88, and glutamine 193. The Proton donor role is filled by aspartate 234. 244–245 (NK) provides a ligand contact to substrate.

This sequence belongs to the eIF-2B alpha/beta/delta subunits family. MtnA subfamily.

It catalyses the reaction 5-(methylsulfanyl)-alpha-D-ribose 1-phosphate = 5-(methylsulfanyl)-D-ribulose 1-phosphate. The protein operates within amino-acid biosynthesis; L-methionine biosynthesis via salvage pathway; L-methionine from S-methyl-5-thio-alpha-D-ribose 1-phosphate: step 1/6. Catalyzes the interconversion of methylthioribose-1-phosphate (MTR-1-P) into methylthioribulose-1-phosphate (MTRu-1-P). The polypeptide is Methylthioribose-1-phosphate isomerase (Thermotoga neapolitana (strain ATCC 49049 / DSM 4359 / NBRC 107923 / NS-E)).